A 118-amino-acid polypeptide reads, in one-letter code: MGDKEFMWALKNGDLDAVKEFVAGGVDVNRTLEGGRKPLHYAADCGQDEIVEFLLAKGANINAADKHGITPLLSACYEGHRKCVELFVSKGADKNVKGPDGLNAFESTDNQAIKDLLH.

ANK repeat units follow at residues 1–30 (MGDKEFMWALKNGDLDAVKEFVAGGVDVNR), 34–65 (GGRKPLHYAADCGQDEIVEFLLAKGANINAAD), and 67–98 (HGITPLLSACYEGHRKCVELFVSKGADKNVKG).

This sequence belongs to the myotrophin family.

The protein resides in the cytoplasm. The protein localises to the nucleus. Its subcellular location is the perinuclear region. Its function is as follows. Regulates NF-kappa-B transcription factor activity. Promotes growth of cardiomyocytes, but not cardiomyocyte proliferation. Promotes cardiac muscle hypertrophy. Plays a role in the regulation of the growth of actin filaments. Inhibits the activity of the F-actin-capping protein complex. This chain is Myotrophin (mtpn), found in Xenopus laevis (African clawed frog).